The sequence spans 474 residues: Cobyric acid synthase (474 aa).

The GATase cobBQ-type domain maps to 251 to 431; sequence TGFVAIPRLP…LHGLLENSAY (181 aa). Catalysis depends on Cys328, which acts as the Nucleophile. His423 is a catalytic residue.

This sequence belongs to the CobB/CobQ family. CobQ subfamily.

It functions in the pathway cofactor biosynthesis; adenosylcobalamin biosynthesis. In terms of biological role, catalyzes amidations at positions B, D, E, and G on adenosylcobyrinic A,C-diamide. NH(2) groups are provided by glutamine, and one molecule of ATP is hydrogenolyzed for each amidation. The protein is Cobyric acid synthase of Deinococcus radiodurans (strain ATCC 13939 / DSM 20539 / JCM 16871 / CCUG 27074 / LMG 4051 / NBRC 15346 / NCIMB 9279 / VKM B-1422 / R1).